Consider the following 260-residue polypeptide: Ribonuclease 3 (260 aa).

The RNase III domain occupies 16 to 145 (VQLLESRLGL…VFGAVFLTSG (130 aa)). Residue Glu58 participates in Mg(2+) binding. The active site involves Asp62. Mg(2+)-binding residues include Asp131 and Glu134. Residue Glu134 is part of the active site. The DRBM domain maps to 172-241 (DYKTLLQEMA…AQATLEKLRE (70 aa)). Residues 219–260 (ATGRSKKEAEQSAAQATLEKLREDAACPTSPPPGTPRHDTPA) form a disordered region.

The protein belongs to the ribonuclease III family. As to quaternary structure, homodimer. The cofactor is Mg(2+).

It is found in the cytoplasm. It carries out the reaction Endonucleolytic cleavage to 5'-phosphomonoester.. Digests double-stranded RNA. Involved in the processing of primary rRNA transcript to yield the immediate precursors to the large and small rRNAs (23S and 16S). Processes some mRNAs, and tRNAs when they are encoded in the rRNA operon. Processes pre-crRNA and tracrRNA of type II CRISPR loci if present in the organism. This chain is Ribonuclease 3, found in Myxococcus xanthus (strain DK1622).